The sequence spans 235 residues: Peptidyl-tRNA hydrolase (235 aa).

A tRNA-binding site is contributed by Y14. H19 (proton acceptor) is an active-site residue. Positions 64, 66, and 112 each coordinate tRNA. The disordered stretch occupies residues 188–235; that stretch reads APARNSGTRPDNPGKGSPEKPAAKPANDPIAEPPSLSDRLRALTERFR. A compositionally biased stretch (basic and acidic residues) spans 225 to 235; the sequence is DRLRALTERFR.

Belongs to the PTH family. Monomer.

The protein resides in the cytoplasm. The catalysed reaction is an N-acyl-L-alpha-aminoacyl-tRNA + H2O = an N-acyl-L-amino acid + a tRNA + H(+). Functionally, hydrolyzes ribosome-free peptidyl-tRNAs (with 1 or more amino acids incorporated), which drop off the ribosome during protein synthesis, or as a result of ribosome stalling. Catalyzes the release of premature peptidyl moieties from peptidyl-tRNA molecules trapped in stalled 50S ribosomal subunits, and thus maintains levels of free tRNAs and 50S ribosomes. This Paracoccus denitrificans (strain Pd 1222) protein is Peptidyl-tRNA hydrolase.